A 297-amino-acid chain; its full sequence is Acetylglutamate kinase (297 aa).

Substrate is bound by residues 68-69 (GG), Arg-90, and Asn-195.

This sequence belongs to the acetylglutamate kinase family. ArgB subfamily.

It is found in the cytoplasm. It catalyses the reaction N-acetyl-L-glutamate + ATP = N-acetyl-L-glutamyl 5-phosphate + ADP. It functions in the pathway amino-acid biosynthesis; L-arginine biosynthesis; N(2)-acetyl-L-ornithine from L-glutamate: step 2/4. In terms of biological role, catalyzes the ATP-dependent phosphorylation of N-acetyl-L-glutamate. This is Acetylglutamate kinase from Mesorhizobium japonicum (strain LMG 29417 / CECT 9101 / MAFF 303099) (Mesorhizobium loti (strain MAFF 303099)).